The chain runs to 1050 residues: Calmodulin-binding transcription activator 2 (1050 aa).

A DNA-binding region (CG-1) is located at residues 15 to 141 (IKQLLSEAQH…YLEVKGNRMS (127 aa)). 2 stretches are compositionally biased toward polar residues: residues 141–171 (STSG…SSIL) and 183–196 (SRQA…NPEP). 2 disordered regions span residues 141 to 196 (STSG…NPEP) and 223 to 246 (NRDG…SGDV). ANK repeat units follow at residues 661–690 (DGQG…SINF) and 694–723 (NGWS…DAGA). 2 IQ domains span residues 870 to 899 (VHAA…RIVK) and 893 to 922 (IRQR…SVGL). The interval 918–940 (WSVGLLEKIILRWRRKGSGLRGF) is calmodulin-binding. A coiled-coil region spans residues 957 to 985 (QEDDYDFLKEGRKQTEERLQKALTRVKSM). At serine 984 the chain carries Phosphoserine.

This sequence belongs to the CAMTA family. In terms of tissue distribution, expressed in roots, stems, old leaves, petals, sepals, top of carpels, stigmas, stamen filaments, anthers and siliques, but not in pollen.

The protein resides in the nucleus. Functionally, transcription activator that binds to the DNA consensus sequence 5'-[ACG]CGCG[GTC]-3'. Regulates transcriptional activity in response to calcium signals. Binds calmodulin in a calcium-dependent manner. Involved in freezing tolerance in association with CAMTA1 and CAMTA3. Contributes together with CAMTA1 and CAMTA3 to the positive regulation of the cold-induced expression of DREB1A/CBF3, DREB1B/CBF1 and DREB1C/CBF2. Involved together with CAMTA3 and CAMTA4 in the positive regulation of a general stress response. Involved in tolerance to aluminum. Binds to the promoter of ALMT1 transporter and contributes to the positive regulation of aluminum-induced expression of ALMT1. The polypeptide is Calmodulin-binding transcription activator 2 (Arabidopsis thaliana (Mouse-ear cress)).